A 654-amino-acid chain; its full sequence is Endoplasmic reticulum chaperone BiP (654 aa).

Positions 1–18 (MKFTVVAAALLLLCAVRA) are cleaved as a signal peptide. Residues 1–80 (MKFTVVAAAL…EGERLIGDAA (80 aa)) are required for interaction with ELAPOR1. 36 to 39 (GTTY) serves as a coordination point for ATP. Ser86 is modified (phosphoserine). Lys96 serves as a coordination point for ATP. Lys125 bears the N6-acetyllysine mark. The interval 125-280 (KPYIQVDIGG…KKKTGKDVRK (156 aa)) is nucleotide-binding (NBD). Residue Tyr160 is modified to 3'-nitrotyrosine. Lys213 bears the N6-acetyllysine mark. An ATP-binding site is contributed by 227–229 (GGT). At Lys271 the chain carries N6-acetyllysine. 293–300 (EKAKRALS) is an ATP binding site. Lys326 bears the N6-acetyllysine mark. A Glycyl lysine isopeptide (Lys-Gly) (interchain with G-Cter in SUMO2) cross-link involves residue Lys352. Position 353 is an N6-acetyllysine; alternate (Lys353). A Glycyl lysine isopeptide (Lys-Gly) (interchain with G-Cter in SUMO1); alternate cross-link involves residue Lys353. An ATP-binding site is contributed by 364–367 (GSTR). The segment at 409–419 (QDTGDLVLLDV) is interdomain linker. The segment at 420–500 (CPLTLGIETV…PRGVPQIEVT (81 aa)) is substrate-binding (SBD). Lys447 bears the N6-succinyllysine mark. Arg492 carries the post-translational modification Omega-N-methylarginine. O-AMP-threonine; alternate is present on Thr518. Thr518 bears the Phosphothreonine; alternate mark. Position 585 is an N6,N6,N6-trimethyllysine; by METTL21A; in vitro (Lys585). An N6,N6-dimethyllysine; alternate modification is found at Lys585. Lys585 bears the N6-methyllysine; alternate mark. Lys591 is subject to N6-methyllysine. Residues 631 to 654 (ISKLYGSGGPPPTGEEDTSEKDEL) are disordered. 2 positions are modified to phosphothreonine: Thr643 and Thr648. Over residues 644-654 (GEEDTSEKDEL) the composition is skewed to acidic residues. Ser649 carries the post-translational modification Phosphoserine. Positions 651 to 654 (KDEL) match the Prevents secretion from ER motif.

The protein belongs to the heat shock protein 70 family. In terms of assembly, monomer and homooligomer; homooligomerization via the interdomain linker inactivates the chaperone activity and acts as a storage of HSPA5/BiP molecules. Interacts with DNAJC1 (via J domain). Component of an EIF2 complex at least composed of CELF1/CUGBP1, CALR, CALR3, EIF2S1, EIF2S2, HSP90B1 and HSPA5. Part of a large chaperone multiprotein complex comprising DNAJB11, HSP90B1, HSPA5, HYOU, PDIA2, PDIA4, PDIA6, PPIB, SDF2L1, UGGT1 and very small amounts of ERP29, but not, or at very low levels, CALR nor CANX. Interacts with TMEM132A and TRIM21. May form a complex with ERLEC1, OS9, SEL1L and SYVN1. Interacts with DNAJC10. Interacts with DNAJB9/ERdj4; leading to recruit HSPA5/BiP to ERN1/IRE1. Interacts with ERN1/IRE1 (via luminal domain); the interaction takes place following interaction with DNAJB9/ERdj4 and leads to inactivate ERN1/IRE1, the interaction also competitively inhibits ERN1 interaction with MANF. Interacts directly with MANF (via SAP domain); the interaction inhibits ATP binding to HSPA5/BiP and subsequent nucleotide exchange. Interacts with EIF2AK3/PERK (via luminal domain); interaction leads to inactivate EIF2AK3/PERK. Interacts with MX1. Interacts with METTL23. Interacts with CEMIP; the interaction induces calcium leakage from the endoplasmic reticulum and cell migration. Interacts with PCSK4 form; the interaction takes place in the endoplasmic reticulum. Interacts with CIPC. Interacts with CCDC88B (via C-terminus); the interaction opposes ERN1-mediated JNK activation, protecting against apoptosis. Interacts with INPP5K; necessary for INPP5K localization at the endoplasmic reticulum. Interacts with MANF; the interaction is direct. Interacts with LOXL2; leading to activate the ERN1/IRE1-XBP1 pathway of the unfolded protein response. Interacts with CLU under stressed condition; interaction increases CLU protein stability; facilitates its retrotranslocation and redistribution to the mitochondria; cooperatively suppress stress-induced apoptosis by stabilizing mitochondrial membrane integrity. Interacts with CCDC47. Interacts with CLN3. Interacts with ELAPOR1; may regulate the function of HSPA5 in apoptosis and cell proliferation. Interacts with CASP7. Interacts with ILDR2; the interaction stabilizes ILDR2 expression. Interacts with ADAM7. In unstressed cells, AMPylation at Thr-518 by FICD inactivates the chaperome activity: AMPylated form is locked in a relatively inert state and only weakly stimulated by J domain-containing proteins. In response to endoplasmic reticulum stress, de-AMPylation by the same protein, FICD, restores the chaperone activity.

Its subcellular location is the endoplasmic reticulum lumen. It is found in the melanosome. It localises to the cytoplasm. The protein localises to the cell surface. It catalyses the reaction ATP + H2O = ADP + phosphate + H(+). The chaperone activity is regulated by ATP-induced allosteric coupling of the nucleotide-binding (NBD) and substrate-binding (SBD) domains. In the ADP-bound and nucleotide-free (apo) states, the two domains have little interaction. In contrast, in the ATP-bound state the two domains are tightly coupled, which results in drastically accelerated kinetics in both binding and release of polypeptide substrates. J domain-containing co-chaperones (DNAJB9/ERdj4 or DNAJC10/ERdj5) stimulate the ATPase activity and are required for efficient substrate recognition by HSPA5/BiP. Homooligomerization inactivates participating HSPA5/BiP protomers and probably act as reservoirs to store HSPA5/BiP molecules when they are not needed by the cell. In terms of biological role, endoplasmic reticulum chaperone that plays a key role in protein folding and quality control in the endoplasmic reticulum lumen. Involved in the correct folding of proteins and degradation of misfolded proteins via its interaction with DNAJC10/ERdj5, probably to facilitate the release of DNAJC10/ERdj5 from its substrate. Acts as a key repressor of the EIF2AK3/PERK and ERN1/IRE1-mediated unfolded protein response (UPR). In the unstressed endoplasmic reticulum, recruited by DNAJB9/ERdj4 to the luminal region of ERN1/IRE1, leading to disrupt the dimerization of ERN1/IRE1, thereby inactivating ERN1/IRE1. Also binds and inactivates EIF2AK3/PERK in unstressed cells. Accumulation of misfolded protein in the endoplasmic reticulum causes release of HSPA5/BiP from ERN1/IRE1 and EIF2AK3/PERK, allowing their homodimerization and subsequent activation. Plays an auxiliary role in post-translational transport of small presecretory proteins across endoplasmic reticulum (ER). May function as an allosteric modulator for SEC61 channel-forming translocon complex, likely cooperating with SEC62 to enable the productive insertion of these precursors into SEC61 channel. Appears to specifically regulate translocation of precursors having inhibitory residues in their mature region that weaken channel gating. May also play a role in apoptosis and cell proliferation. The chain is Endoplasmic reticulum chaperone BiP from Rattus norvegicus (Rat).